Here is a 237-residue protein sequence, read N- to C-terminus: Ribitol-5-phosphate cytidylyltransferase (237 aa).

Residues 7 to 10, 81 to 87, and Ser112 contribute to the CTP site; these read LAGG and GSDRNES.

This sequence belongs to the IspD/TarI cytidylyltransferase family. TarI subfamily.

It carries out the reaction D-ribitol 5-phosphate + CTP + H(+) = CDP-L-ribitol + diphosphate. Its pathway is cell wall biogenesis; poly(ribitol phosphate) teichoic acid biosynthesis. Its function is as follows. Catalyzes the transfer of the cytidylyl group of CTP to D-ribitol 5-phosphate. This Bacillus spizizenii (strain ATCC 23059 / NRRL B-14472 / W23) (Bacillus subtilis subsp. spizizenii) protein is Ribitol-5-phosphate cytidylyltransferase.